A 704-amino-acid polypeptide reads, in one-letter code: Penicillin-binding protein H (704 aa).

A helical transmembrane segment spans residues 23-43 (FFLAVFVLFTALIFKLGVVQI). The tract at residues 197–223 (MNPNKSNSNGKNGALLDEKKNSSQRPK) is disordered. Residues 200 to 209 (NKSNSNGKNG) show a composition bias toward low complexity. Positions 212-223 (LDEKKNSSQRPK) are enriched in basic and acidic residues. S415 serves as the catalytic Acyl-ester intermediate.

Belongs to the transpeptidase family.

The protein localises to the cell membrane. It catalyses the reaction Preferential cleavage: (Ac)2-L-Lys-D-Ala-|-D-Ala. Also transpeptidation of peptidyl-alanyl moieties that are N-acyl substituents of D-alanine.. The protein operates within cell wall biogenesis; peptidoglycan biosynthesis. Involved in the polymerization of peptidoglycan. Plays a redundant role with PBP-2A (pbpA) in determining the rod shape of the cell during vegetative growth and spore outgrowth. In Bacillus subtilis (strain 168), this protein is Penicillin-binding protein H.